The following is a 458-amino-acid chain: Histone acetyltransferase KAT8 (458 aa).

Low complexity predominate over residues 1–14 (MAAQGATAAVAATT). Positions 1 to 52 (MAAQGATAAVAATTSGIVGEGEPGPGENTSVEGPARSPGRVSPPTPARGEPE) are disordered. Alanine 2 carries the post-translational modification N-acetylalanine. A phosphoserine mark is found at serine 37 and serine 42. The 56-residue stretch at 55–110 (VEIGETYLCRRPDSTWHSAEVIQSRVNDQEGREEFYVHYVGFNRRLDEWVDKNRLA) folds into the Tudor-knot domain. Lysine 113 is modified (N6-acetyllysine). Residues 140–149 (RNQKRKHDEI) carry the Nuclear localization signal motif. Positions 174-447 (TKVKYVDKIH…VDSVCLKWAP (274 aa)) constitute an MYST-type HAT domain. The sufficient for interaction with KANSL1 stretch occupies residues 174-458 (TKVKYVDKIH…KHKQVKLSKK (285 aa)). A C2HC MYST-type zinc finger spans residues 207–232 (LWLCEYCLKYMKFEKSYRFHLGQCQW). Zn(2+) is bound by residues cysteine 210, cysteine 213, histidine 226, and cysteine 230. Position 274 is an N6-acetyllysine; by autocatalysis (lysine 274). Isoleucine 317, threonine 319, arginine 325, arginine 326, glycine 327, glycine 329, and lysine 330 together coordinate acetyl-CoA. The residue at position 348 (serine 348) is a Phosphoserine. Glutamate 350 functions as the Proton donor/acceptor in the catalytic mechanism. Residues serine 354, serine 363, tyrosine 408, and lysine 432 each contribute to the acetyl-CoA site.

This sequence belongs to the MYST (SAS/MOZ) family. Component of a multisubunit histone acetyltransferase complex (MSL) at least composed of the MOF/KAT8, MSL1/hampin, MSL2L1 and MSL3L1. Component of the NSL complex at least composed of MOF/KAT8, KANSL1, KANSL2, KANSL3, MCRS1, PHF20, OGT1/OGT, WDR5 and HCFC1. Component of some MLL1/MLL complex, at least composed of the core components KMT2A/MLL1, ASH2L, HCFC1, WDR5 and RBBP5, as well as the facultative components BACC1, CHD8, E2F6, HSP70, INO80C, KANSL1, LAS1L, MAX, MCRS1, MGA, MOF/KAT8, PELP1, PHF20, PRP31, RING2, RUVB1/TIP49A, RUVB2/TIP49B, SENP3, TAF1, TAF4, TAF6, TAF7, TAF9 and TEX10. Interacts with the chromodomain of MORF4L1/MRG15. Interacts with ATM (via its Tudor-knot domain); possibly regulating the activity of ATM. Interacts with NELFD. In terms of processing, acetylation at Lys-274 facilitates cognate substrate Lys-binding and acetylation. Although considered as an autoacetylation event, acetylation at Lys-274 probably takes place via a non-enzymatic process following acetyl-CoA-binding, which primes KAT8 for cognate protein-lysine acetylation. Deacetylated by SIRT1.

The protein resides in the nucleus. It is found in the chromosome. The protein localises to the mitochondrion. The catalysed reaction is L-lysyl-[histone] + acetyl-CoA = N(6)-acetyl-L-lysyl-[histone] + CoA + H(+). The enzyme catalyses L-lysyl-[protein] + acetyl-CoA = N(6)-acetyl-L-lysyl-[protein] + CoA + H(+). It carries out the reaction propanoyl-CoA + L-lysyl-[protein] = N(6)-propanoyl-L-lysyl-[protein] + CoA + H(+). With respect to regulation, the acetyltransferase activity is inhibited by anacardic acid derivatives. Histone acetyltransferase that catalyzes histone H4 acetylation at 'Lys-5'- and 'Lys-8' (H4K5ac and H4K8ac) or 'Lys-16' (H4K16ac), depending on the context. Catalytic component of the MSL histone acetyltransferase complex, a multiprotein complex that mediates the majority of histone H4 acetylation at 'Lys-16' (H4K16ac), an epigenetic mark that prevents chromatin compaction. H4K16ac constitutes the only acetylation mark intergenerationally transmitted and regulates key biological processes, such as oogenesis, embryonic stem cell pluripotency, hematopoiesis or glucose metabolism. The MSL complex is required for chromosome stability and genome integrity by maintaining homeostatic levels of H4K16ac. The MSL complex is also involved in gene dosage by promoting up-regulation of genes expressed by the X chromosome. X up-regulation is required to compensate for autosomal biallelic expression. The MSL complex also participates in gene dosage compensation by promoting expression of Tsix non-coding RNA. As part of the NSL histone acetyltransferase complex, catalyzes histone H4 acetylation at 'Lys-5'- and 'Lys-8' (H4K5ac and H4K8ac) at transcription start sites and promotes transcription initiation. The NSL complex also acts as a regulator of gene expression in mitochondria: KAT8 associates with mitochondrial DNA and controls expression of respiratory genes in an acetyltransferase-dependent mechanism. Also functions as an acetyltransferase for non-histone targets, such as ALKBH5, COX17, IRF3, KDM1A/LSD1, LMNA, PAX7 or TP53/p53. Acts as an inhibitor of antiviral immunity by acetylating IRF3, preventing IRF3 recruitment to promoters. Acts as a regulator of asymmetric division in muscle stem cells by mediating acetylation of PAX7. As part of the NSL complex, acetylates TP53/p53 at 'Lys-120'. Acts as a regulator of epithelial-to-mesenchymal transition as part of the NSL complex by mediating acetylation of KDM1A/LSD1. The NSL complex is required for nuclear architecture maintenance by mediating acetylation of LMNA. Promotes mitochondrial integrity by catalyzing acetylation of COX17. In addition to protein acetyltransferase activity, able to mediate protein propionylation. The polypeptide is Histone acetyltransferase KAT8 (Kat8) (Rattus norvegicus (Rat)).